The chain runs to 652 residues: DNA ligase (652 aa).

NAD(+) is bound by residues 29–33, 78–79, and Glu-107; these read DSDYD and SL. The N6-AMP-lysine intermediate role is filled by Lys-109. Positions 130, 164, 278, and 302 each coordinate NAD(+). Zn(2+) contacts are provided by Cys-395, Cys-398, Cys-413, and Cys-418. Residues 577–652 enclose the BRCT domain; it reads NSDAALFGLT…IEDEDWLRQL (76 aa).

The protein belongs to the NAD-dependent DNA ligase family. LigA subfamily. It depends on Mg(2+) as a cofactor. Mn(2+) is required as a cofactor.

It carries out the reaction NAD(+) + (deoxyribonucleotide)n-3'-hydroxyl + 5'-phospho-(deoxyribonucleotide)m = (deoxyribonucleotide)n+m + AMP + beta-nicotinamide D-nucleotide.. DNA ligase that catalyzes the formation of phosphodiester linkages between 5'-phosphoryl and 3'-hydroxyl groups in double-stranded DNA using NAD as a coenzyme and as the energy source for the reaction. It is essential for DNA replication and repair of damaged DNA. The polypeptide is DNA ligase (Streptococcus pyogenes serotype M1).